Here is a 507-residue protein sequence, read N- to C-terminus: Cytochrome P450 52A7 (507 aa).

A helical membrane pass occupies residues 6-26; the sequence is LHYWYYVLPAFIIFHWIVSAI. Cys-456 provides a ligand contact to heme.

It belongs to the cytochrome P450 family. It depends on heme as a cofactor.

It is found in the membrane. In terms of biological role, together with an NADPH cytochrome P450 the enzyme system catalyzes the terminal hydroxylation as the first step in the assimilation of alkanes and fatty acids. Preferentially hydroxylates lauric acid. The protein is Cytochrome P450 52A7 (CYP52A7) of Candida tropicalis (Yeast).